We begin with the raw amino-acid sequence, 664 residues long: ATP-dependent RNA helicase MSS116, mitochondrial (664 aa).

A mitochondrion-targeting transit peptide spans 1–26; that stretch reads MLTSILIKGRTPVLASRNLLAALSNC. The disordered stretch occupies residues 42-79; sequence NRDQRNFGRNQRNNNSNRYRNSRFNSRPRTRSREDDDE. Residues 48 to 68 show a composition bias toward low complexity; that stretch reads FGRNQRNNNSNRYRNSRFNSR. The Q motif motif lies at 106–134; sequence SLLEEGVLDKEIHKAITRMEFPGLTPVQQ. The Helicase ATP-binding domain occupies 139–326; that stretch reads PILSSEDHDV…NNIMNKKECL (188 aa). Position 152-159 (152-159) interacts with ATP; the sequence is AKTGTGKT. A DEAD box motif is present at residues 267–270; it reads DEAD. The 158-residue stretch at 355-512 folds into the Helicase C-terminal domain; it reads SIFAAVEHIK…EKYEPSEEIK (158 aa). Residues 602–664 form a disordered region; the sequence is GNNKSYDYDD…NYSSRNSNIY (63 aa). A compositionally biased stretch (basic and acidic residues) spans 628–638; sequence QNRDYDDEPFR. Low complexity predominate over residues 639–649; the sequence is RSNNNRRSFSR. Residues 653–664 are compositionally biased toward polar residues; it reads KNNYSSRNSNIY.

Belongs to the DEAD box helicase family. DDX18/HAS1 subfamily.

It is found in the mitochondrion matrix. It catalyses the reaction ATP + H2O = ADP + phosphate + H(+). Functionally, ATP-dependent RNA helicase required for mitochondrial splicing of group I and II introns. Specifically involved in the ATP-dependent splicing of the bl1 intron of COB. Also required for efficient mitochondrial translation. The sequence is that of ATP-dependent RNA helicase MSS116, mitochondrial (MSS116) from Saccharomyces cerevisiae (strain ATCC 204508 / S288c) (Baker's yeast).